The following is an 852-amino-acid chain: Elongation factor 2 (852 aa).

A tr-type G domain is found at 17–356 (RNIRNMSVIA…MIAFHLPSPV (340 aa)). A GTP-binding site is contributed by 26-33 (AHVDHGKS). A phosphothreonine mark is found at threonine 57 and threonine 59. GTP contacts are provided by residues 170 to 173 (NKMD) and 227 to 229 (SGL). Histidine 709 carries the post-translational modification Diphthamide.

This sequence belongs to the TRAFAC class translation factor GTPase superfamily. Classic translation factor GTPase family. EF-G/EF-2 subfamily. Phosphorylation by EF-2 kinase completely inactivates EF-2. Post-translationally, AMPylated by fic-1.

Its subcellular location is the cytoplasm. It carries out the reaction GTP + H2O = GDP + phosphate + H(+). Catalyzes the GTP-dependent ribosomal translocation step during translation elongation. During this step, the ribosome changes from the pre-translocational (PRE) to the post-translocational (POST) state as the newly formed A-site-bound peptidyl-tRNA and P-site-bound deacylated tRNA move to the P and E sites, respectively. Catalyzes the coordinated movement of the two tRNA molecules, the mRNA and conformational changes in the ribosome. Involved in the morphogenesis of epidermal tissues. This chain is Elongation factor 2 (eef-2), found in Caenorhabditis elegans.